A 147-amino-acid polypeptide reads, in one-letter code: D-aminoacyl-tRNA deacylase (147 aa).

Residues 136-137 (GP) carry the Gly-cisPro motif, important for rejection of L-amino acids motif.

This sequence belongs to the DTD family. Homodimer.

It localises to the cytoplasm. The catalysed reaction is glycyl-tRNA(Ala) + H2O = tRNA(Ala) + glycine + H(+). It carries out the reaction a D-aminoacyl-tRNA + H2O = a tRNA + a D-alpha-amino acid + H(+). In terms of biological role, an aminoacyl-tRNA editing enzyme that deacylates mischarged D-aminoacyl-tRNAs. Also deacylates mischarged glycyl-tRNA(Ala), protecting cells against glycine mischarging by AlaRS. Acts via tRNA-based rather than protein-based catalysis; rejects L-amino acids rather than detecting D-amino acids in the active site. By recycling D-aminoacyl-tRNA to D-amino acids and free tRNA molecules, this enzyme counteracts the toxicity associated with the formation of D-aminoacyl-tRNA entities in vivo and helps enforce protein L-homochirality. This Nitratiruptor sp. (strain SB155-2) protein is D-aminoacyl-tRNA deacylase.